The sequence spans 471 residues: Ribulose bisphosphate carboxylase large chain (471 aa).

Lys-5 is subject to N6,N6,N6-trimethyllysine. The substrate site is built by Asn-114 and Thr-164. The active-site Proton acceptor is Lys-166. Lys-168 is a substrate binding site. Residues Lys-192, Asp-194, and Glu-195 each contribute to the Mg(2+) site. Lys-192 carries the N6-carboxylysine modification. His-285 serves as the catalytic Proton acceptor. Substrate is bound by residues Arg-286, His-318, and Ser-370.

Belongs to the RuBisCO large chain family. Type I subfamily. In terms of assembly, heterohexadecamer of 8 large chains and 8 small chains; disulfide-linked. The disulfide link is formed within the large subunit homodimers. It depends on Mg(2+) as a cofactor. In terms of processing, the disulfide bond which can form in the large chain dimeric partners within the hexadecamer appears to be associated with oxidative stress and protein turnover.

It is found in the plastid. Its subcellular location is the chloroplast. It catalyses the reaction 2 (2R)-3-phosphoglycerate + 2 H(+) = D-ribulose 1,5-bisphosphate + CO2 + H2O. It carries out the reaction D-ribulose 1,5-bisphosphate + O2 = 2-phosphoglycolate + (2R)-3-phosphoglycerate + 2 H(+). RuBisCO catalyzes two reactions: the carboxylation of D-ribulose 1,5-bisphosphate, the primary event in carbon dioxide fixation, as well as the oxidative fragmentation of the pentose substrate in the photorespiration process. Both reactions occur simultaneously and in competition at the same active site. In Anthocleista grandiflora (Forest fever tree), this protein is Ribulose bisphosphate carboxylase large chain.